Reading from the N-terminus, the 301-residue chain is Protoheme IX farnesyltransferase (301 aa).

9 helical membrane-spanning segments follow: residues 29–49 (VVAL…PGAV), 51–71 (LQPL…AAAF), 101–121 (AFSF…WWVN), 123–143 (LTAW…TAYL), 150–170 (NIVI…TAVT), 177–197 (ALLL…ALAI), 223–243 (CILL…LVGM), 244–264 (SGPV…YKAW), and 281–301 (FSIY…YLWG).

The protein belongs to the UbiA prenyltransferase family. Protoheme IX farnesyltransferase subfamily.

It is found in the cell inner membrane. The enzyme catalyses heme b + (2E,6E)-farnesyl diphosphate + H2O = Fe(II)-heme o + diphosphate. It functions in the pathway porphyrin-containing compound metabolism; heme O biosynthesis; heme O from protoheme: step 1/1. Its function is as follows. Converts heme B (protoheme IX) to heme O by substitution of the vinyl group on carbon 2 of heme B porphyrin ring with a hydroxyethyl farnesyl side group. This Shewanella denitrificans (strain OS217 / ATCC BAA-1090 / DSM 15013) protein is Protoheme IX farnesyltransferase.